The primary structure comprises 115 residues: Replication initiation control protein YabA (115 aa).

Zn(2+) is bound by residues H85, C87, C101, and C104.

It belongs to the YabA family. As to quaternary structure, homotetramer. Interacts with both DnaA and DnaN, acting as a bridge between these two proteins. Requires Zn(2+) as cofactor.

It localises to the cytoplasm. The protein localises to the nucleoid. In terms of biological role, involved in control of chromosome replication initiation. Inhibits the cooperative binding of DnaA to the oriC region, thus negatively regulating initiation of chromosome replication. Inhibits the ability of DnaA-ATP to form a helix on DNA; does not disassemble preformed DnaA-DNA helices. Decreases the residence time of DnaA on the chromosome at its binding sites (oriC, replication forks and promoter-binding sites). Tethers DnaA to the replication machinery via the DNA polymerase beta sliding clamp subunit (dnaN). Associates with oriC and other DnaA targets on the chromosome in a DnaA-dependent manner. This is Replication initiation control protein YabA from Lactiplantibacillus plantarum (strain ATCC BAA-793 / NCIMB 8826 / WCFS1) (Lactobacillus plantarum).